The sequence spans 234 residues: Sugar fermentation stimulation protein A (234 aa).

A DNA-binding region (H-T-H motif) is located at residues 201 to 220 (LLSEAQQRGVEILAYKAEIS).

This sequence belongs to the SfsA family.

Binds to DNA non-specifically. Could be a regulatory factor involved in maltose metabolism. The sequence is that of Sugar fermentation stimulation protein A from Escherichia coli (strain 55989 / EAEC).